Consider the following 341-residue polypeptide: Phosphoribosylformylglycinamidine cyclo-ligase (341 aa).

Belongs to the AIR synthase family.

Its subcellular location is the cytoplasm. The enzyme catalyses 2-formamido-N(1)-(5-O-phospho-beta-D-ribosyl)acetamidine + ATP = 5-amino-1-(5-phospho-beta-D-ribosyl)imidazole + ADP + phosphate + H(+). It participates in purine metabolism; IMP biosynthesis via de novo pathway; 5-amino-1-(5-phospho-D-ribosyl)imidazole from N(2)-formyl-N(1)-(5-phospho-D-ribosyl)glycinamide: step 2/2. The chain is Phosphoribosylformylglycinamidine cyclo-ligase from Caldicellulosiruptor saccharolyticus (strain ATCC 43494 / DSM 8903 / Tp8T 6331).